An 831-amino-acid chain; its full sequence is Periplasmic nitrate reductase (831 aa).

A signal peptide (tat-type signal) is located at residues 1 to 29 (MTLTRRDLIKAQAAATAAAAAGLPVSALA). In terms of domain architecture, 4Fe-4S Mo/W bis-MGD-type spans 41–97 (IRWSKAPCRFCGTGCGVMVGTRDGQVVATHGDTQAEVNRGLNCVKGYFLSKIMYGED). Positions 48, 51, 55, and 83 each coordinate [4Fe-4S] cluster. Mo-bis(molybdopterin guanine dinucleotide) contacts are provided by residues Lys85, Gln152, Asn177, Cys181, 214–221 (WGSNMAEM), 245–249 (STFTH), 264–266 (GTD), Met375, Gln379, Asn485, 511–512 (SD), Lys534, Asp561, and 721–730 (TGRVLEHWHS). Trp797 contributes to the substrate binding site. The Mo-bis(molybdopterin guanine dinucleotide) site is built by Asn805 and Lys822.

Belongs to the prokaryotic molybdopterin-containing oxidoreductase family. NasA/NapA/NarB subfamily. As to quaternary structure, component of the periplasmic nitrate reductase NapAB complex composed of NapA and NapB. It depends on [4Fe-4S] cluster as a cofactor. Mo-bis(molybdopterin guanine dinucleotide) is required as a cofactor. Post-translationally, predicted to be exported by the Tat system. The position of the signal peptide cleavage has not been experimentally proven.

The protein localises to the periplasm. It carries out the reaction 2 Fe(II)-[cytochrome] + nitrate + 2 H(+) = 2 Fe(III)-[cytochrome] + nitrite + H2O. In terms of biological role, catalytic subunit of the periplasmic nitrate reductase complex NapAB. Receives electrons from NapB and catalyzes the reduction of nitrate to nitrite. The chain is Periplasmic nitrate reductase from Cereibacter sphaeroides (strain ATCC 17023 / DSM 158 / JCM 6121 / CCUG 31486 / LMG 2827 / NBRC 12203 / NCIMB 8253 / ATH 2.4.1.) (Rhodobacter sphaeroides).